The primary structure comprises 128 residues: AECSVDIQGNDQMQFNTNAITVDKSCKQFTVNLSHPGNLPKNVMGHNWVLSTAADMQGVVTDGMASGLDKDYLKPDDSRVIAHTKLIGSGEKDSVTFDVSKLKEGEQYMSFCTFPGHSALMKGTLTLK.

Residues 1 to 128 form the Plastocyanin-like domain; that stretch reads AECSVDIQGN…ALMKGTLTLK (128 aa). Residues Cys3 and Cys26 are joined by a disulfide bond. Cu cation is bound by residues His46, Cys112, His117, and Met121.

The protein resides in the periplasm. Transfers electrons from cytochrome c551 to cytochrome oxidase. The polypeptide is Azurin (Pseudomonas aeruginosa).